Consider the following 232-residue polypeptide: E3 ubiquitin-protein ligase RNF125 (232 aa).

Positions 1-10 are enriched in polar residues; it reads MGSVLSTDSG. The interval 1-23 is disordered; that stretch reads MGSVLSTDSGKSAPASATARALE. Residue Gly2 is the site of N-myristoyl glycine attachment. Cys37 and Cys40 together coordinate Zn(2+). The segment at 37-76 adopts an RING-type zinc-finger fold; the sequence is CAVCLEVLHQPVRTRCGHVFCRSCIATSLKNNKWTCPYCR. The segment at 43–45 is interaction with the C2HC RNF-type zinc finger; sequence VLH. Zn(2+) contacts are provided by Cys52, His54, Cys57, Cys60, Cys72, Cys75, Cys100, and Cys103. The C2HC RNF-type zinc-finger motif lies at 100 to 119; that stretch reads CAECDTLVCLSEMRAHIRTC. Residues 109-113 are interaction with the RING-type zinc finger; sequence LSEMR. The Zn(2+) site is built by His115 and Cys119. The linker region stretch occupies residues 120-128; that stretch reads QKYIDKYGP. Positions 210–224 are required for interaction with ubiquitin and for autoubiquitination; it reads EEALIRRVLDRSLLE.

Interacts with UBE2D1. Interacts with VCP/p97; leading to recruit RNF125 to RIGI and promote ubiquitination of RIGI. Post-translationally, autoubiquitinated, leading to its subsequent proteasomal degradation. Predominantly expressed in lymphoid tissues, including bone marrow, spleen and thymus. Also weakly expressed in other tissues. Predominant in the CD4(+) and CD8(+) T-cells, suggesting that it is preferentially confined to T-cells.

The protein resides in the golgi apparatus membrane. It carries out the reaction S-ubiquitinyl-[E2 ubiquitin-conjugating enzyme]-L-cysteine + [acceptor protein]-L-lysine = [E2 ubiquitin-conjugating enzyme]-L-cysteine + N(6)-ubiquitinyl-[acceptor protein]-L-lysine.. The protein operates within protein modification; protein ubiquitination. Its function is as follows. E3 ubiquitin-protein ligase that mediates ubiquitination and subsequent proteasomal degradation of target proteins, such as RIGI, MAVS/IPS1, IFIH1/MDA5, JAK1 and p53/TP53. Acts as a negative regulator of type I interferon production by mediating ubiquitination of RIGI at 'Lys-181', leading to RIGI degradation. Mediates ubiquitination and subsequent degradation of p53/TP53. Mediates ubiquitination and subsequent degradation of JAK1. Acts as a positive regulator of T-cell activation. This chain is E3 ubiquitin-protein ligase RNF125, found in Homo sapiens (Human).